The primary structure comprises 466 residues: 55 kDa erythrocyte membrane protein (466 aa).

The residue at position 2 (Thr2) is an N-acetylthreonine. Phosphoserine occurs at positions 13 and 19. Thr49 is subject to Phosphothreonine. Phosphoserine is present on residues Ser52, Ser57, and Ser110. The 82-residue stretch at 71–152 (LIQFEKVTEE…MISLKVIPNQ (82 aa)) folds into the PDZ domain. An SH3 domain is found at 158-228 (ALQMFMRAQF…PSPELQEWRV (71 aa)). At Ser243 the chain carries Phosphoserine. The tract at residues 268-466 (VVSYEEVVRL…PQWVPVSWVY (199 aa)) is interaction with PALS1. Residues 282–451 (RKTLVLIGAS…TLKKLQEAFD (170 aa)) enclose the Guanylate kinase-like domain.

Belongs to the MAGUK family. Heterodimer with PALS1. Interacts with DLG5 and NF2. Interacts (via guanylate kinase-like domain) with WHRN (via third PDZ domain). Post-translationally, palmitoylated.

It localises to the cell membrane. The protein resides in the cell projection. It is found in the stereocilium. Its function is as follows. Essential regulator of neutrophil polarity. Regulates neutrophil polarization by regulating AKT1 phosphorylation through a mechanism that is independent of PIK3CG activity. The sequence is that of 55 kDa erythrocyte membrane protein (MPP1) from Pongo abelii (Sumatran orangutan).